Reading from the N-terminus, the 309-residue chain is Olfactory receptor 5H2 (309 aa).

Topologically, residues 1–28 (MEQDNTTLLTEFVLTGLTYQPEWKMPLF) are extracellular. Asn-5 carries an N-linked (GlcNAc...) asparagine glycan. The chain crosses the membrane as a helical span at residues 29 to 49 (LVFLVIYLITIVWNLGLIALI). The Cytoplasmic portion of the chain corresponds to 50–56 (WNDPQLH). Residues 57 to 77 (IPMYFFLGSLAFVDAWISSTV) traverse the membrane as a helical segment. Residues 78–97 (TPKMLVNFLAKNRMISLSEC) lie on the Extracellular side of the membrane. A disulfide bridge connects residues Cys-97 and Cys-179. The helical transmembrane segment at 98–118 (MIQFFSFAFGGTTECFLLATM) threads the bilayer. At 119–143 (AYDRYVAICKPLLYPVIMNNSLCIR) the chain is on the cytoplasmic side. Residues 144-164 (LLAFSFLGGFLHALIHEVLIF) form a helical membrane-spanning segment. Topologically, residues 165–193 (RLTFCNSNIIHHFYCDIIPLFMISCTDPS) are extracellular. A helical membrane pass occupies residues 194 to 214 (INFLMVFILSGSIQVFTIVTV). The Cytoplasmic segment spans residues 215–239 (LNSYTFALFTILKKKSVRGVRKAFS). The helical transmembrane segment at 240-260 (TCGAHLLSVSLYYGPLIFMYL) threads the bilayer. Residues 261-271 (RPASPQADDQD) are Extracellular-facing. A helical transmembrane segment spans residues 272–292 (MIDSVFYTIIIPLLNPIIYSL). At 293-309 (RNKQVIDSFTKMVKRNV) the chain is on the cytoplasmic side.

The protein belongs to the G-protein coupled receptor 1 family.

The protein localises to the cell membrane. Its function is as follows. Odorant receptor. The polypeptide is Olfactory receptor 5H2 (OR5H2) (Homo sapiens (Human)).